We begin with the raw amino-acid sequence, 59 residues long: Putative potassium channel toxin Ts23 (59 aa).

A signal peptide spans 1–22; it reads MKAFYGILIIFILISMLDLSQQ. Disulfide bonds link Cys29–Cys50, Cys35–Cys55, and Cys39–Cys57.

The protein belongs to the short scorpion toxin superfamily. Potassium channel inhibitor family. Alpha-KTx 04 subfamily. As to expression, expressed by the venom gland.

It localises to the secreted. Functionally, potently blocks Kv1.1/KCNA1 (85%), Kv1.2/KCNA2 (91%), Kv1.3/KCNA3 (89%), Kv1.6/KCNA6 (94%), and Shaker (97%). The sequence is that of Putative potassium channel toxin Ts23 from Tityus serrulatus (Brazilian scorpion).